Here is a 166-residue protein sequence, read N- to C-terminus: Monodehydroascorbate reductase, fruit isozyme (166 aa).

This sequence belongs to the FAD-dependent oxidoreductase family. The cofactor is FAD. The N-terminus is blocked.

It carries out the reaction 2 monodehydro-L-ascorbate radical + NADH + H(+) = 2 L-ascorbate + NAD(+). Functionally, catalyzes the conversion of monodehydroascorbate to ascorbate, oxidizing NADH in the process. This Cucumis sativus (Cucumber) protein is Monodehydroascorbate reductase, fruit isozyme.